The chain runs to 430 residues: Tol-Pal system protein TolB (430 aa).

A signal peptide spans 1–21 (MKQAFRVALGFLVLWASVLHA).

This sequence belongs to the TolB family. In terms of assembly, the Tol-Pal system is composed of five core proteins: the inner membrane proteins TolA, TolQ and TolR, the periplasmic protein TolB and the outer membrane protein Pal. They form a network linking the inner and outer membranes and the peptidoglycan layer.

It is found in the periplasm. Part of the Tol-Pal system, which plays a role in outer membrane invagination during cell division and is important for maintaining outer membrane integrity. TolB occupies a key intermediary position in the Tol-Pal system because it communicates directly with both membrane-embedded components, Pal in the outer membrane and TolA in the inner membrane. The protein is Tol-Pal system protein TolB of Yersinia pestis.